The sequence spans 316 residues: tRNA-dihydrouridine(16) synthase (316 aa).

Residues 7–9 and glutamine 68 contribute to the FMN site; that span reads PME. Catalysis depends on cysteine 98, which acts as the Proton donor. FMN contacts are provided by residues lysine 139, 200-202, and 224-225; these read NGE and GR.

This sequence belongs to the Dus family. DusC subfamily. Requires FMN as cofactor.

The catalysed reaction is 5,6-dihydrouridine(16) in tRNA + NADP(+) = uridine(16) in tRNA + NADPH + H(+). It carries out the reaction 5,6-dihydrouridine(16) in tRNA + NAD(+) = uridine(16) in tRNA + NADH + H(+). Its function is as follows. Catalyzes the synthesis of 5,6-dihydrouridine (D), a modified base found in the D-loop of most tRNAs, via the reduction of the C5-C6 double bond in target uridines. Specifically modifies U16 in tRNAs. The sequence is that of tRNA-dihydrouridine(16) synthase from Escherichia coli O157:H7.